The chain runs to 597 residues: Elongation factor 4 (597 aa).

The region spanning 2–184 (QHIRNFSIIA…SIVARVPPPK (183 aa)) is the tr-type G domain. Residues 14-19 (DHGKST) and 131-134 (NKMD) each bind GTP.

The protein belongs to the TRAFAC class translation factor GTPase superfamily. Classic translation factor GTPase family. LepA subfamily.

The protein localises to the cell inner membrane. It carries out the reaction GTP + H2O = GDP + phosphate + H(+). Its function is as follows. Required for accurate and efficient protein synthesis under certain stress conditions. May act as a fidelity factor of the translation reaction, by catalyzing a one-codon backward translocation of tRNAs on improperly translocated ribosomes. Back-translocation proceeds from a post-translocation (POST) complex to a pre-translocation (PRE) complex, thus giving elongation factor G a second chance to translocate the tRNAs correctly. Binds to ribosomes in a GTP-dependent manner. The chain is Elongation factor 4 from Bordetella bronchiseptica (strain ATCC BAA-588 / NCTC 13252 / RB50) (Alcaligenes bronchisepticus).